Here is a 177-residue protein sequence, read N- to C-terminus: 3-hydroxydecanoyl-[acyl-carrier-protein] dehydratase (177 aa).

Residue H76 is part of the active site.

Belongs to the thioester dehydratase family. FabA subfamily. Homodimer.

Its subcellular location is the cytoplasm. The catalysed reaction is a (3R)-hydroxyacyl-[ACP] = a (2E)-enoyl-[ACP] + H2O. It catalyses the reaction (3R)-hydroxydecanoyl-[ACP] = (2E)-decenoyl-[ACP] + H2O. The enzyme catalyses (2E)-decenoyl-[ACP] = (3Z)-decenoyl-[ACP]. It functions in the pathway lipid metabolism; fatty acid biosynthesis. Necessary for the introduction of cis unsaturation into fatty acids. Catalyzes the dehydration of (3R)-3-hydroxydecanoyl-ACP to E-(2)-decenoyl-ACP and then its isomerization to Z-(3)-decenoyl-ACP. Can catalyze the dehydratase reaction for beta-hydroxyacyl-ACPs with saturated chain lengths up to 16:0, being most active on intermediate chain length. In Actinobacillus succinogenes (strain ATCC 55618 / DSM 22257 / CCUG 43843 / 130Z), this protein is 3-hydroxydecanoyl-[acyl-carrier-protein] dehydratase.